The sequence spans 551 residues: Arginine--tRNA ligase (551 aa).

The short motif at A125–H135 is the 'HIGH' region element.

This sequence belongs to the class-I aminoacyl-tRNA synthetase family. As to quaternary structure, monomer.

The protein resides in the cytoplasm. It catalyses the reaction tRNA(Arg) + L-arginine + ATP = L-arginyl-tRNA(Arg) + AMP + diphosphate. This chain is Arginine--tRNA ligase, found in Nitratidesulfovibrio vulgaris (strain DSM 19637 / Miyazaki F) (Desulfovibrio vulgaris).